Here is a 235-residue protein sequence, read N- to C-terminus: Claudin-16 (235 aa).

The Cytoplasmic portion of the chain corresponds to 1-3 (MKD). Residues 4-24 (LLQYAACFLAIFSTGFLIVAT) form a helical membrane-spanning segment. Residues 25 to 79 (WTDCWMVNADDSLEVSTKCRGLWWECVTNAFDGIRTCDEYDSIYAEHPLKLVVTR) lie on the Extracellular side of the membrane. The chain crosses the membrane as a helical span at residues 80–100 (ALMITADILAGFGFITLLLGL). The Cytoplasmic portion of the chain corresponds to 101 to 115 (DCVKFLPDDPQIKVR). The helical transmembrane segment at 116-136 (LCFVAGTTLLIAGTPGIIGSV) threads the bilayer. Over 137–169 (WYAVDVYVERSSLVLHNIFLGIQYKFGWSCWLG) the chain is Extracellular. A helical membrane pass occupies residues 170–190 (MAGSLGCFLAGALLTCCLYLF). Over 191 to 235 (KDVGPERNYPYAMRKPYSTAGVSMAKSYKAPRTETAKMYAVDTRV) the chain is Cytoplasmic. Residues 233–235 (TRV) carry the Interaction with TJP1 motif.

This sequence belongs to the claudin family. In terms of assembly, can form heteropolymeric tight junction strands with other claudins. Interacts with CLDN19. Cannot form tight junction strands on its own. Interacts (via PDZ-binding motif TRV) with TJP1 (via PDZ domain). As to expression, expressed in the corticomedullary axis of the TAL, specifically in the cortex and the outer stripe of outer medulla (OSOM) zone (at protein level).

The protein localises to the cell junction. It localises to the tight junction. It is found in the cell membrane. The catalysed reaction is Mg(2+)(in) = Mg(2+)(out). It carries out the reaction Ca(2+)(in) = Ca(2+)(out). The enzyme catalyses Na(+)(in) = Na(+)(out). It catalyses the reaction K(+)(in) = K(+)(out). The catalysed reaction is Rb(+)(in) = Rb(+)(out). It carries out the reaction Cs(+)(in) = Cs(+)(out). The enzyme catalyses Li(+)(in) = Li(+)(out). In terms of biological role, forms paracellular channels: coassembles with CLDN19 into tight junction strands with cation-selective channels through the strands, conveying epithelial permeability in a process known as paracellular tight junction permeability. Involved in the maintenance of ion gradients along the nephron. In the thick ascending limb (TAL) of Henle's loop, facilitates sodium paracellular permeability from the interstitial compartment to the lumen, contributing to the lumen-positive transepithelial potential that drives paracellular magnesium and calcium reabsorption. The protein is Claudin-16 of Mus musculus (Mouse).